We begin with the raw amino-acid sequence, 357 residues long: Arginine kinase (357 aa).

At Ala2 the chain carries N-acetylalanine. A Phosphagen kinase N-terminal domain is found at 9–91 (KLDEGFKKLE…FDPIIEDYHK (83 aa)). Residue 64–68 (GVGVY) coordinates L-arginine. One can recognise a Phosphagen kinase C-terminal domain in the interval 119–356 (FVISTRVRCG…LELIKIEKEM (238 aa)). ATP-binding positions include 122 to 126 (STRVR) and His185. Glu225 contacts L-arginine. Position 229 (Arg229) interacts with ATP. Cys271 is a binding site for L-arginine. Residues 280–284 (RASVH) and 309–314 (RGTRGE) contribute to the ATP site. Glu314 lines the L-arginine pocket.

It belongs to the ATP:guanido phosphotransferase family.

It catalyses the reaction L-arginine + ATP = N(omega)-phospho-L-arginine + ADP + H(+). The sequence is that of Arginine kinase from Eriocheir sinensis (Chinese mitten crab).